The following is a 959-amino-acid chain: MESKKNSYYKNVMDKIYAKEKDVLSINKDFQENNLTRISLILNYKDFYLKFDESLHGYSFGYVTNLFGLKLYSPFTETVRFDDTEKYMKTILGVPSNEALPQLCSDQHQNFEEKDPQIEILPSPQQQQQQQQQQQQQQQQQQQQQQQQQQQQQQQQQQQQLTPPPSPPLLPIPQPPAQNEEQQLTQPPSIPPPQQKQIKIQKSDRGTQVKSITNPVNSLSKYINNSSLDYSIKKNYTLEEIYENNKNYMDKTNNFLHFLFTFIDKTTIKDLEHFEKEISRVHNIEKLINEQNVKGETPLHSLILYNSESCLKKLVIAKINCMGIFDYSKCDNLNKNLLTHAIEKGDFEIIKLVLIGGCPLKMSPRSKLFKQNFKLYRQQIYRVFEIKEFLTELGFNQFIPMFLEYEFKNINIYYQIKSFIMVLTLNADEILRWKSLLEPNKNLDLDSFCIEYQIKDQNGSESQLMADHFKKVCQLNSLFGYIDFHTQIGSAGNASVFEGTYKGMPIACKEMPVSGTYEQRVDSIKEIAAVGQIEDLGGCTVVKTVGVLKYNEKLFLVMVKEKCNLLSFLSNKSEILKMQRGGIWTSIFKISKEILKGLISLREVGMYHRDFKTANFLVSNTGKILISDFGTSRDENEKRFNTFAKTIGTLWYRCPRLGDCSGDEKTLNHYNEKSEIYSLGIILWELICIAMTGTYVSPKIALFQNEVDFSIWIHKDYRFSFPIGTPQSLVKLITSMCLPCRDRRPTVHQILDEVGIIETEFLSNRGIKGEQTYSGLECWREFNFSKQNVFGISISNLHDTEYKAVNKYNYTSYNNKNSLLMKRYLDNSNFVVELINPNGIFKFKSFFEKEKLLYLKLKSTYKGEYYFDMGKFLTTIIQIHQITEIYYKMLQKYRELGLLRNNNNNINNNNNNNNNCNNSKKFKTTSESTSALGSDASSSSSPSSSSPSPKYSASIYHHQ.

A disordered region spans residues 154–213; it reads QQQQQQQLTPPPSPPLLPIPQPPAQNEEQQLTQPPSIPPPQQKQIKIQKSDRGTQVKSIT. Positions 162-176 are enriched in pro residues; that stretch reads TPPPSPPLLPIPQPP. ANK repeat units lie at residues 294–324 and 333–362; these read KGETPLHSLILYNSESCLKKLVIAKINCMGI and LNKNLLTHAIEKGDFEIIKLVLIGGCPLKM. The 281-residue stretch at 482-762 folds into the Protein kinase domain; the sequence is IDFHTQIGSA…EVGIIETEFL (281 aa). ATP contacts are provided by residues 488-496 and Lys-509; that span reads IGSAGNASV. The active-site Proton acceptor is Asp-610. Residues 904-959 are disordered; sequence NNINNNNNNNNNCNNSKKFKTTSESTSALGSDASSSSSPSSSSPSPKYSASIYHHQ.

The protein belongs to the protein kinase superfamily. Ser/Thr protein kinase family.

It catalyses the reaction L-seryl-[protein] + ATP = O-phospho-L-seryl-[protein] + ADP + H(+). The enzyme catalyses L-threonyl-[protein] + ATP = O-phospho-L-threonyl-[protein] + ADP + H(+). In Dictyostelium discoideum (Social amoeba), this protein is Probable serine/threonine-protein kinase DDB_G0291664.